The sequence spans 567 residues: Myo-inositol transporter 1 (567 aa).

The Cytoplasmic segment spans residues Met1 to Ala88. The segment at Ile14 to Leu42 is disordered. Over residues Thr16–Ala33 the composition is skewed to polar residues. Residues Ala89–Ile109 form a helical membrane-spanning segment. The Extracellular portion of the chain corresponds to Lys110–Glu123. The chain crosses the membrane as a helical span at residues Val124–Ser144. At Asp145 to Arg150 the chain is on the cytoplasmic side. The helical transmembrane segment at Leu151–His171 threads the bilayer. Over Thr172–Arg180 the chain is Extracellular. Residues Phe181 to Leu201 form a helical membrane-spanning segment. The Cytoplasmic segment spans residues Ala202 to Arg209. A helical membrane pass occupies residues Leu210 to Ala230. At Ser231 to Arg240 the chain is on the extracellular side. A helical membrane pass occupies residues Trp241–Pro261. Residues Glu262–Gln343 are Cytoplasmic-facing. A helical membrane pass occupies residues Leu344 to Asn364. N-linked (GlcNAc...) asparagine glycosylation is present at Asn365. Over Asn365 to Thr367 the chain is Extracellular. Residues Ala368 to Val388 traverse the membrane as a helical segment. Topologically, residues Asp389–Met397 are cytoplasmic. A helical membrane pass occupies residues Leu398–Leu418. The Extracellular segment spans residues Thr419–Ser435. The chain crosses the membrane as a helical span at residues Leu436 to Gly456. Residues Asn457 to Ser476 are Cytoplasmic-facing. A helical transmembrane segment spans residues Ile477–Met497. The Extracellular portion of the chain corresponds to Asp498–Ser503. The helical transmembrane segment at Gly504 to Tyr524 threads the bilayer. Residues Pro525–Glu567 lie on the Cytoplasmic side of the membrane.

It belongs to the major facilitator superfamily. Sugar transporter (TC 2.A.1.1) family.

It is found in the cell membrane. The enzyme catalyses myo-inositol(out) + H(+)(out) = myo-inositol(in) + H(+)(in). May function as a transporter or as a sensor for myo-inositol. The sequence is that of Myo-inositol transporter 1 from Cryptococcus neoformans var. grubii serotype A (strain H99 / ATCC 208821 / CBS 10515 / FGSC 9487) (Filobasidiella neoformans var. grubii).